A 216-amino-acid polypeptide reads, in one-letter code: Ribosomal RNA small subunit methyltransferase G (216 aa).

S-adenosyl-L-methionine contacts are provided by residues Gly-81, Phe-86, 130–131 (AE), and Arg-144.

It belongs to the methyltransferase superfamily. RNA methyltransferase RsmG family.

Its subcellular location is the cytoplasm. It carries out the reaction guanosine(527) in 16S rRNA + S-adenosyl-L-methionine = N(7)-methylguanosine(527) in 16S rRNA + S-adenosyl-L-homocysteine. Functionally, specifically methylates the N7 position of guanine in position 527 of 16S rRNA. The chain is Ribosomal RNA small subunit methyltransferase G from Rhodospirillum centenum (strain ATCC 51521 / SW).